Here is a 427-residue protein sequence, read N- to C-terminus: Serine/threonine-protein kinase ssn3 (427 aa).

One can recognise a Protein kinase domain in the interval 40-369 (YHIVGFISSG…AQEALEHPYF (330 aa)). Residues 46–54 (ISSGTYGRV) and Lys70 each bind ATP. Asp172 functions as the Proton acceptor in the catalytic mechanism. Basic and acidic residues predominate over residues 390–399 (RRVTQDDNDI). The interval 390–427 (RRVTQDDNDIRSGSLPGTKRSGLPDDSLLGRATKRLKE) is disordered.

This sequence belongs to the protein kinase superfamily. CMGC Ser/Thr protein kinase family. CDC2/CDKX subfamily. As to quaternary structure, component of the srb8-11 complex, a regulatory module of the Mediator complex. It depends on Mg(2+) as a cofactor.

Its subcellular location is the nucleus. It carries out the reaction L-seryl-[protein] + ATP = O-phospho-L-seryl-[protein] + ADP + H(+). It catalyses the reaction L-threonyl-[protein] + ATP = O-phospho-L-threonyl-[protein] + ADP + H(+). The enzyme catalyses [DNA-directed RNA polymerase] + ATP = phospho-[DNA-directed RNA polymerase] + ADP + H(+). Component of the srb8-11 complex. The srb8-11 complex is a regulatory module of the Mediator complex which is itself involved in regulation of basal and activated RNA polymerase II-dependent transcription. The srb8-11 complex may be involved in the transcriptional repression of a subset of genes regulated by Mediator. It may inhibit the association of the Mediator complex with RNA polymerase II to form the holoenzyme complex. The srb8-11 complex phosphorylates the C-terminal domain (CTD) of the largest subunit of RNA polymerase II. This Aspergillus niger (strain ATCC MYA-4892 / CBS 513.88 / FGSC A1513) protein is Serine/threonine-protein kinase ssn3 (ssn3).